The following is a 476-amino-acid chain: Glycogen synthase (476 aa).

Residue lysine 15 coordinates ADP-alpha-D-glucose.

Belongs to the glycosyltransferase 1 family. Bacterial/plant glycogen synthase subfamily.

The enzyme catalyses [(1-&gt;4)-alpha-D-glucosyl](n) + ADP-alpha-D-glucose = [(1-&gt;4)-alpha-D-glucosyl](n+1) + ADP + H(+). It functions in the pathway glycan biosynthesis; glycogen biosynthesis. Its function is as follows. Synthesizes alpha-1,4-glucan chains using ADP-glucose. This chain is Glycogen synthase, found in Streptococcus sanguinis (strain SK36).